Here is a 375-residue protein sequence, read N- to C-terminus: Outer membrane porin OmpD (375 aa).

The first 34 residues, 1–34, serve as a signal peptide directing secretion; the sequence is MRKHAKKIIRIIKMKLKLVAVAVTSLLAAGVVNA.

The protein belongs to the Gram-negative porin family. Homotrimer. Mixed heterotrimers with other porins are also probable.

It is found in the cell outer membrane. Its function is as follows. Forms pores that allow passive diffusion of small molecules across the outer membrane. This Salmonella typhimurium (strain SL1344) protein is Outer membrane porin OmpD.